The primary structure comprises 316 residues: CD276 antigen (316 aa).

The signal sequence occupies residues 1-28 (MLRGWGGPSVGVSMGTALGVLCLCLTGA). The 111-residue stretch at 29-139 (VEVQVSEDPV…DSAAVSLQVA (111 aa)) folds into the Ig-like V-type domain. Topologically, residues 29-248 (VEVQVSEDPV…GQPMTFPPEA (220 aa)) are extracellular. N104, N189, and N215 each carry an N-linked (GlcNAc...) asparagine glycan. An Ig-like C2-type domain is found at 145-238 (PSMTLEPNKD…QDAHGSVTIT (94 aa)). An intrachain disulfide couples C165 to C220. The chain crosses the membrane as a helical span at residues 249–269 (LWVTVGLSVCLVILLVALAFV). Topologically, residues 270–316 (CWRKIKQSCEEENAGAEDQDGDGEGSKTALRPLKHSENKEDDGQEIA) are cytoplasmic. The segment covering 281 to 292 (ENAGAEDQDGDG) has biased composition (acidic residues). Positions 281–316 (ENAGAEDQDGDGEGSKTALRPLKHSENKEDDGQEIA) are disordered.

The protein belongs to the immunoglobulin superfamily. BTN/MOG family. Interacts with TREML2 and this interaction enhances T-cell activation.

The protein resides in the membrane. Modulates T-cell-mediated immune responses and the development of acute and chronic transplant rejection. May play a positive regulatory role in bone formation and has a dual role in the bone-immune interface. Induces antitumor immunity as it activates both acquired and innate immunity leading to natural killer cell and CD8 T-cell dependent killing of tumor cells. The polypeptide is CD276 antigen (Cd276) (Rattus norvegicus (Rat)).